A 244-amino-acid chain; its full sequence is Ribonuclease PH (244 aa).

Phosphate contacts are provided by residues R87 and 125–127 (GTR).

Belongs to the RNase PH family. Homohexameric ring arranged as a trimer of dimers.

The enzyme catalyses tRNA(n+1) + phosphate = tRNA(n) + a ribonucleoside 5'-diphosphate. In terms of biological role, phosphorolytic 3'-5' exoribonuclease that plays an important role in tRNA 3'-end maturation. Removes nucleotide residues following the 3'-CCA terminus of tRNAs; can also add nucleotides to the ends of RNA molecules by using nucleoside diphosphates as substrates, but this may not be physiologically important. Probably plays a role in initiation of 16S rRNA degradation (leading to ribosome degradation) during starvation. This Synechococcus sp. (strain JA-2-3B'a(2-13)) (Cyanobacteria bacterium Yellowstone B-Prime) protein is Ribonuclease PH.